Here is a 188-residue protein sequence, read N- to C-terminus: Protein GrpE 2 (188 aa).

Basic and acidic residues predominate over residues 1 to 29; sequence MDNQEKKTNYQNTDKENDLEKNKEKKNDE. Positions 1-33 are disordered; that stretch reads MDNQEKKTNYQNTDKENDLEKNKEKKNDESIFQ.

The protein belongs to the GrpE family. In terms of assembly, homodimer.

Its subcellular location is the cytoplasm. Participates actively in the response to hyperosmotic and heat shock by preventing the aggregation of stress-denatured proteins, in association with DnaK and GrpE. It is the nucleotide exchange factor for DnaK and may function as a thermosensor. Unfolded proteins bind initially to DnaJ; upon interaction with the DnaJ-bound protein, DnaK hydrolyzes its bound ATP, resulting in the formation of a stable complex. GrpE releases ADP from DnaK; ATP binding to DnaK triggers the release of the substrate protein, thus completing the reaction cycle. Several rounds of ATP-dependent interactions between DnaJ, DnaK and GrpE are required for fully efficient folding. This is Protein GrpE 2 from Buchnera aphidicola subsp. Schizaphis graminum (strain Sg).